Here is a 390-residue protein sequence, read N- to C-terminus: MNDNKILVVNAGSSSIKFQLFDYHKKVLAKALCERIFVDGFFKLEFNEQKVEEKVAFPDHHAAVTHFLNTLKKHKIIQELSDIILVGHRVVQGANYFKDSVIVDAEALAKIKEFIKLAPLHNKPEADVIEIFFKEVPSAKNVAVFDTTFHTTIPQENYLYAVPRSWEQKHLVRRYGFHGTSYKFINNYLEKHLNKQNLNLIVCHLGNGASVCAIKNGKSFNTSMGFTPLEGLIMGTRSGDLDPAIIGYVAEQENMSASDVVNALNKKSGMLALTGASDMRDVFAKPQENAVAIKMYVNRVADYIAKYLNQLEGNIDGLVFTGGIGENASDCVELFINAVKSLGFATDLKLFVKYGDSCVVSTPQSKYKIYRVRTNEELMIVEDSIRLTQK.

Position 10 (N10) interacts with Mg(2+). Position 17 (K17) interacts with ATP. R89 is a substrate binding site. D146 functions as the Proton donor/acceptor in the catalytic mechanism. ATP-binding positions include 204 to 208 (HLGNG), 278 to 280 (DMR), and 323 to 327 (GIGEN). Mg(2+) is bound at residue E376.

The protein belongs to the acetokinase family. As to quaternary structure, homodimer. Mg(2+) is required as a cofactor. The cofactor is Mn(2+).

The protein localises to the cytoplasm. The catalysed reaction is acetate + ATP = acetyl phosphate + ADP. The protein operates within metabolic intermediate biosynthesis; acetyl-CoA biosynthesis; acetyl-CoA from acetate: step 1/2. Catalyzes the formation of acetyl phosphate from acetate and ATP. Can also catalyze the reverse reaction. In Mycoplasma pneumoniae (strain ATCC 29342 / M129 / Subtype 1) (Mycoplasmoides pneumoniae), this protein is Acetate kinase.